The sequence spans 180 residues: Decaprenylphosphoryl-5-phosphoribose phosphatase (180 aa).

The next 4 helical transmembrane spans lie at 31 to 51 (ALSHFGEHSAGWVALAAAGAL), 61 to 81 (LAVGAGAFLAHAAAVVIKRVV), 116 to 136 (VLLAQTTGVPAPALLVPPMAL), and 139 to 159 (LVLGVHYPTDVVTGVVVGALV).

Belongs to the PA-phosphatase related phosphoesterase family.

Its subcellular location is the cell membrane. The enzyme catalyses trans,octa-cis-decaprenylphospho-beta-D-ribofuranose 5-phosphate + H2O = trans,octa-cis-decaprenylphospho-beta-D-ribofuranose + phosphate. Its pathway is cell wall biogenesis; cell wall polysaccharide biosynthesis. Functionally, phosphatase involved in the biosynthesis of decaprenylphosphoryl arabinose (DPA), which serves as the arabinose donor for the biosynthesis of arabinogalactan, the major mycobacterial cell wall polysaccharide. Catalyzes the dephosphorylation of decaprenylphosphoryl-5-phosphoribose (DPPR) to decaprenyl-phosphoribose (DPR). The sequence is that of Decaprenylphosphoryl-5-phosphoribose phosphatase from Mycolicibacterium smegmatis (strain ATCC 700084 / mc(2)155) (Mycobacterium smegmatis).